The primary structure comprises 26 residues: Protein YsdD (26 aa).

Positions Met-1–Val-26 are disordered.

In Escherichia coli (strain K12), this protein is Protein YsdD.